A 160-amino-acid polypeptide reads, in one-letter code: Ureidoglycolate lyase (160 aa).

The protein belongs to the ureidoglycolate lyase family. As to quaternary structure, homodimer. Ni(2+) serves as cofactor.

The catalysed reaction is (S)-ureidoglycolate = urea + glyoxylate. The protein operates within nitrogen metabolism; (S)-allantoin degradation. In terms of biological role, catalyzes the catabolism of the allantoin degradation intermediate (S)-ureidoglycolate, generating urea and glyoxylate. Involved in the anaerobic utilization of allantoin as sole nitrogen source. Reinforces the induction of genes involved in the degradation of allantoin and glyoxylate by producing glyoxylate. The polypeptide is Ureidoglycolate lyase (Escherichia coli O139:H28 (strain E24377A / ETEC)).